The sequence spans 770 residues: 1,4-alpha-glucan branching enzyme GlgB (770 aa).

Asp437 serves as the catalytic Nucleophile. The Proton donor role is filled by Glu488.

It belongs to the glycosyl hydrolase 13 family. GlgB subfamily. Monomer.

The enzyme catalyses Transfers a segment of a (1-&gt;4)-alpha-D-glucan chain to a primary hydroxy group in a similar glucan chain.. The protein operates within glycan biosynthesis; glycogen biosynthesis. In terms of biological role, catalyzes the formation of the alpha-1,6-glucosidic linkages in glycogen by scission of a 1,4-alpha-linked oligosaccharide from growing alpha-1,4-glucan chains and the subsequent attachment of the oligosaccharide to the alpha-1,6 position. The sequence is that of 1,4-alpha-glucan branching enzyme GlgB from Synechococcus sp. (strain JA-3-3Ab) (Cyanobacteria bacterium Yellowstone A-Prime).